The following is a 413-amino-acid chain: 3-isopropylmalate dehydratase large subunit (413 aa).

Residues Cys295, Cys353, and Cys356 each coordinate [4Fe-4S] cluster.

The protein belongs to the aconitase/IPM isomerase family. LeuC type 2 subfamily. As to quaternary structure, heterodimer of LeuC and LeuD. It depends on [4Fe-4S] cluster as a cofactor.

The catalysed reaction is (2R,3S)-3-isopropylmalate = (2S)-2-isopropylmalate. Its pathway is amino-acid biosynthesis; L-leucine biosynthesis; L-leucine from 3-methyl-2-oxobutanoate: step 2/4. Catalyzes the isomerization between 2-isopropylmalate and 3-isopropylmalate, via the formation of 2-isopropylmaleate. The sequence is that of 3-isopropylmalate dehydratase large subunit from Pyrobaculum calidifontis (strain DSM 21063 / JCM 11548 / VA1).